The primary structure comprises 697 residues: Long-chain-fatty-acid--CoA ligase 6 (697 aa).

The chain crosses the membrane as a helical; Signal-anchor for type III membrane protein span at residues 25-45 (LSATTLVSMGALAAILAYWFT). At 46–697 (HRPKALQPPC…QIEELYSISM (652 aa)) the chain is on the cytoplasmic side.

This sequence belongs to the ATP-dependent AMP-binding enzyme family. Requires Mg(2+) as cofactor. In terms of tissue distribution, expressed predominantly in erythrocyte precursors, in particular in reticulocytes, fetal blood cells derived from fetal liver, hemopoietic stem cells from cord blood, bone marrow and brain.

The protein resides in the mitochondrion outer membrane. The protein localises to the peroxisome membrane. It is found in the microsome membrane. Its subcellular location is the endoplasmic reticulum membrane. It carries out the reaction a long-chain fatty acid + ATP + CoA = a long-chain fatty acyl-CoA + AMP + diphosphate. The catalysed reaction is (5Z,8Z,11Z,14Z)-eicosatetraenoate + ATP + CoA = (5Z,8Z,11Z,14Z)-eicosatetraenoyl-CoA + AMP + diphosphate. The enzyme catalyses hexadecanoate + ATP + CoA = hexadecanoyl-CoA + AMP + diphosphate. It catalyses the reaction (E)-hexadec-2-enoate + ATP + CoA = (2E)-hexadecenoyl-CoA + AMP + diphosphate. It carries out the reaction 15-hydroxy-(5Z,8Z,11Z,13E)-eicosatetraenoate + ATP + CoA = 15-hydroxy-(5Z,8Z,11Z,13E)-eicosatetraenoyl-CoA + AMP + diphosphate. The catalysed reaction is 12-hydroxy-(5Z,8Z,10E,14Z)-eicosatetraenoate + ATP + CoA = 12-hydroxy-(5Z,8Z,10E,14Z)-eicosatetraenoyl-CoA + AMP + diphosphate. The enzyme catalyses 5-hydroxy-(6E,8Z,11Z,14Z)-eicosatetraenoate + ATP + CoA = 5-hydroxy-(6E,8Z,11Z,14Z)-eicosatetraenoyl-CoA + AMP + diphosphate. Functionally, catalyzes the conversion of long-chain fatty acids to their active form acyl-CoA for both synthesis of cellular lipids, and degradation via beta-oxidation. Plays an important role in fatty acid metabolism in brain and the acyl-CoAs produced may be utilized exclusively for the synthesis of the brain lipid. In Homo sapiens (Human), this protein is Long-chain-fatty-acid--CoA ligase 6.